Reading from the N-terminus, the 364-residue chain is Peptide chain release factor 1 (364 aa).

An N5-methylglutamine modification is found at Gln-238.

Belongs to the prokaryotic/mitochondrial release factor family. In terms of processing, methylated by PrmC. Methylation increases the termination efficiency of RF1.

It localises to the cytoplasm. In terms of biological role, peptide chain release factor 1 directs the termination of translation in response to the peptide chain termination codons UAG and UAA. In Psychrobacter sp. (strain PRwf-1), this protein is Peptide chain release factor 1.